The following is a 270-amino-acid chain: 4-hydroxy-tetrahydrodipicolinate reductase (270 aa).

NAD(+)-binding positions include 8-13, aspartate 34, 102-104, and 128-131; these read GALGRM, GTT, and SQNY. Histidine 160 serves as the catalytic Proton donor/acceptor. Histidine 161 contacts (S)-2,3,4,5-tetrahydrodipicolinate. The active-site Proton donor is lysine 164. 170–171 is a (S)-2,3,4,5-tetrahydrodipicolinate binding site; sequence GT.

The protein belongs to the DapB family.

It localises to the cytoplasm. The enzyme catalyses (S)-2,3,4,5-tetrahydrodipicolinate + NAD(+) + H2O = (2S,4S)-4-hydroxy-2,3,4,5-tetrahydrodipicolinate + NADH + H(+). It carries out the reaction (S)-2,3,4,5-tetrahydrodipicolinate + NADP(+) + H2O = (2S,4S)-4-hydroxy-2,3,4,5-tetrahydrodipicolinate + NADPH + H(+). Its pathway is amino-acid biosynthesis; L-lysine biosynthesis via DAP pathway; (S)-tetrahydrodipicolinate from L-aspartate: step 4/4. Functionally, catalyzes the conversion of 4-hydroxy-tetrahydrodipicolinate (HTPA) to tetrahydrodipicolinate. This chain is 4-hydroxy-tetrahydrodipicolinate reductase, found in Methanococcus maripaludis (strain C6 / ATCC BAA-1332).